The following is a 100-amino-acid chain: Urease subunit gamma (100 aa).

Belongs to the urease gamma subunit family. Heterotrimer of UreA (gamma), UreB (beta) and UreC (alpha) subunits. Three heterotrimers associate to form the active enzyme.

The protein localises to the cytoplasm. The catalysed reaction is urea + 2 H2O + H(+) = hydrogencarbonate + 2 NH4(+). It participates in nitrogen metabolism; urea degradation; CO(2) and NH(3) from urea (urease route): step 1/1. This Azotobacter vinelandii (strain DJ / ATCC BAA-1303) protein is Urease subunit gamma.